Consider the following 28-residue polypeptide: MDVAEYAAHDATGLAELIREGQVSACEV.

In terms of assembly, homodimer.

It catalyses the reaction an anilide + H2O = aniline + a carboxylate + H(+). The chain is Aryl acylamidase from Nocardia globerula.